A 134-amino-acid chain; its full sequence is MRGGPVNSHDVTDEQWEGLAQVVPLRGRDAWPSAVGHRSIPEAQTEARRRFVVLRVNIFADARDVAETLMRGIPVLLDLTSAETEVAKRVLDFSTGVVFGLASGMHRVDRNVFLLTPPGTEVQGLMEGVGVPGI.

Belongs to the SepF family. Homodimer. Interacts with FtsZ.

It is found in the cytoplasm. Functionally, cell division protein that is part of the divisome complex and is recruited early to the Z-ring. Probably stimulates Z-ring formation, perhaps through the cross-linking of FtsZ protofilaments. Its function overlaps with FtsA. The chain is Cell division protein SepF 1 from Streptomyces avermitilis (strain ATCC 31267 / DSM 46492 / JCM 5070 / NBRC 14893 / NCIMB 12804 / NRRL 8165 / MA-4680).